Here is a 513-residue protein sequence, read N- to C-terminus: Ectonucleoside triphosphate diphosphohydrolase 1 (513 aa).

The Cytoplasmic segment spans residues 1-16; it reads MEDRRESELKVFCSKN. The chain crosses the membrane as a helical span at residues 17-37; sequence ILSILGFSCIIAVIALLALGL. Over 38 to 481 the chain is Extracellular; sequence TQNKALPENV…SPPLPHSTYV (444 aa). N-linked (GlcNAc...) asparagine glycosylation occurs at Asn-73. Glu-174 functions as the Proton acceptor in the catalytic mechanism. N-linked (GlcNAc...) asparagine glycans are attached at residues Asn-227 and Asn-245. 2 disulfides stabilise this stretch: Cys-255/Cys-300 and Cys-281/Cys-327. Residues Asn-307 and Asn-336 are each glycosylated (N-linked (GlcNAc...) asparagine). Cysteines 340 and 345 form a disulfide. Asn-373 carries N-linked (GlcNAc...) asparagine glycosylation. Cys-393 and Cys-416 form a disulfide bridge. The N-linked (GlcNAc...) asparagine glycan is linked to Asn-460. Residues 482-502 traverse the membrane as a helical segment; sequence FLMVLFSLILLAVIIVGIVVF. Residues 503-513 lie on the Cytoplasmic side of the membrane; it reads HKPSYFWKDMV.

This sequence belongs to the GDA1/CD39 NTPase family. Homodimer; disulfide-linked. The cofactor is Ca(2+). Mg(2+) serves as cofactor. N-glycosylated. In terms of processing, the N-terminus is blocked. Post-translationally, palmitoylated on Cys-13; which is required for caveola targeting.

Its subcellular location is the membrane. The protein resides in the caveola. The enzyme catalyses a ribonucleoside 5'-triphosphate + 2 H2O = a ribonucleoside 5'-phosphate + 2 phosphate + 2 H(+). The catalysed reaction is a ribonucleoside 5'-triphosphate + H2O = a ribonucleoside 5'-diphosphate + phosphate + H(+). It catalyses the reaction a ribonucleoside 5'-diphosphate + H2O = a ribonucleoside 5'-phosphate + phosphate + H(+). It carries out the reaction ATP + 2 H2O = AMP + 2 phosphate + 2 H(+). The enzyme catalyses ATP + H2O = ADP + phosphate + H(+). The catalysed reaction is ADP + H2O = AMP + phosphate + H(+). It catalyses the reaction CTP + 2 H2O = CMP + 2 phosphate + 2 H(+). It carries out the reaction CTP + H2O = CDP + phosphate + H(+). The enzyme catalyses CDP + H2O = CMP + phosphate + H(+). The catalysed reaction is GTP + 2 H2O = GMP + 2 phosphate + 2 H(+). It catalyses the reaction GTP + H2O = GDP + phosphate + H(+). It carries out the reaction GDP + H2O = GMP + phosphate + H(+). The enzyme catalyses ITP + 2 H2O = IMP + 2 phosphate + 2 H(+). The catalysed reaction is ITP + H2O = IDP + phosphate + H(+). It catalyses the reaction IDP + H2O = IMP + phosphate + H(+). It carries out the reaction UTP + 2 H2O = UMP + 2 phosphate + 2 H(+). The enzyme catalyses UTP + H2O = UDP + phosphate + H(+). The catalysed reaction is UDP + H2O = UMP + phosphate + H(+). Catalyzes the hydrolysis of both di- and triphosphate nucleotides (NDPs and NTPs) and hydrolyze NTPs to nucleotide monophosphates (NMPs) in two distinct successive phosphate-releasing steps, with NDPs as intermediates and participates in the regulation of extracellular levels of nucleotides. By hydrolyzing proinflammatory ATP and platelet-activating ADP to AMP, it blocks platelet aggregation and supports blood flow. The chain is Ectonucleoside triphosphate diphosphohydrolase 1 from Bos taurus (Bovine).